A 362-amino-acid polypeptide reads, in one-letter code: Fructose-bisphosphate aldolase (362 aa).

Serine 63 provides a ligand contact to D-glyceraldehyde 3-phosphate. The active-site Proton donor is aspartate 112. Histidine 113, aspartate 147, glutamate 177, and histidine 229 together coordinate Zn(2+). Glycine 230 provides a ligand contact to dihydroxyacetone phosphate. Histidine 268 contributes to the Zn(2+) binding site. Residues 269–271 (GGS) and 290–293 (NVDT) contribute to the dihydroxyacetone phosphate site.

Belongs to the class II fructose-bisphosphate aldolase family. In terms of assembly, homodimer. The cofactor is Zn(2+).

It carries out the reaction beta-D-fructose 1,6-bisphosphate = D-glyceraldehyde 3-phosphate + dihydroxyacetone phosphate. Its pathway is carbohydrate degradation; glycolysis; D-glyceraldehyde 3-phosphate and glycerone phosphate from D-glucose: step 4/4. Functionally, catalyzes the aldol condensation of dihydroxyacetone phosphate (DHAP or glycerone-phosphate) with glyceraldehyde 3-phosphate (G3P) to form fructose 1,6-bisphosphate (FBP) in gluconeogenesis and the reverse reaction in glycolysis. In Neurospora crassa (strain ATCC 24698 / 74-OR23-1A / CBS 708.71 / DSM 1257 / FGSC 987), this protein is Fructose-bisphosphate aldolase (fba).